The primary structure comprises 63 residues: Large ribosomal subunit protein uL29 (63 aa).

Belongs to the universal ribosomal protein uL29 family.

In Aliarcobacter butzleri (strain RM4018) (Arcobacter butzleri), this protein is Large ribosomal subunit protein uL29.